A 418-amino-acid polypeptide reads, in one-letter code: Zinc metalloproteinase-disintegrin-like batroxstatin-2 (418 aa).

The Peptidase M12B domain occupies 10 to 206; the sequence is KYVKLVLVAD…DMPQCILEKP (197 aa). 3 disulfide bridges follow: Cys121–Cys201, Cys161–Cys185, and Cys163–Cys168. Position 146 (His146) interacts with Zn(2+). Residue Glu147 is part of the active site. Positions 150 and 156 each coordinate Zn(2+). One can recognise a Disintegrin domain in the interval 214–299; sequence PPVCGNYFVE…AECTDRFQRN (86 aa). Val216, Asn219, Phe221, Glu223, Glu226, and Asp229 together coordinate Ca(2+). 14 disulfides stabilise this stretch: Cys217–Cys246, Cys228–Cys241, Cys230–Cys236, Cys240–Cys263, Cys254–Cys260, Cys259–Cys285, Cys272–Cys292, Cys279–Cys310, Cys303–Cys315, Cys322–Cys372, Cys337–Cys383, Cys350–Cys360, Cys367–Cys409, and Cys403–Cys414. The D/ECD-tripeptide motif lies at 278 to 280; it reads ECD. The Ca(2+) site is built by Asp280, Met281, Asp283, Asp294, and Arg295. Residue Asn312 is glycosylated (N-linked (GlcNAc...) asparagine).

The protein belongs to the venom metalloproteinase (M12B) family. P-III subfamily. P-IIIc sub-subfamily. Homodimer; disulfide-linked. Requires Zn(2+) as cofactor. In terms of tissue distribution, expressed by the venom gland.

The protein localises to the secreted. Its function is as follows. Snake venom zinc metalloprotease that induces apoptosis in vascular endothelial cells (VEC), without degrading the extracellular matrix (it cannot cleave collagen) or inhibiting adhesion of VEC. Has also fibrinogenolytic and hemorrhagic activities. This chain is Zinc metalloproteinase-disintegrin-like batroxstatin-2, found in Bothrops atrox (Barba amarilla).